Here is a 484-residue protein sequence, read N- to C-terminus: ATP synthase subunit beta (484 aa).

ATP is bound at residue 169–176 (GGAGVGKT).

This sequence belongs to the ATPase alpha/beta chains family. As to quaternary structure, F-type ATPases have 2 components, CF(1) - the catalytic core - and CF(0) - the membrane proton channel. CF(1) has five subunits: alpha(3), beta(3), gamma(1), delta(1), epsilon(1). CF(0) has three main subunits: a(1), b(2) and c(9-12). The alpha and beta chains form an alternating ring which encloses part of the gamma chain. CF(1) is attached to CF(0) by a central stalk formed by the gamma and epsilon chains, while a peripheral stalk is formed by the delta and b chains.

The protein resides in the cell membrane. The catalysed reaction is ATP + H2O + 4 H(+)(in) = ADP + phosphate + 5 H(+)(out). Produces ATP from ADP in the presence of a proton gradient across the membrane. The catalytic sites are hosted primarily by the beta subunits. The chain is ATP synthase subunit beta from Nocardioides sp. (strain ATCC BAA-499 / JS614).